Here is a 410-residue protein sequence, read N- to C-terminus: Arginine deiminase (410 aa).

Residue Cys400 is the Amidino-cysteine intermediate of the active site.

It belongs to the arginine deiminase family.

The protein localises to the cytoplasm. The enzyme catalyses L-arginine + H2O = L-citrulline + NH4(+). It functions in the pathway amino-acid degradation; L-arginine degradation via ADI pathway; carbamoyl phosphate from L-arginine: step 1/2. This Streptococcus agalactiae serotype III (strain NEM316) protein is Arginine deiminase.